Consider the following 289-residue polypeptide: 3-methyl-2-oxobutanoate hydroxymethyltransferase (289 aa).

The segment covering 1–15 has biased composition (polar residues); the sequence is MSTTFKLDTSTSRAN. The segment at 1-21 is disordered; it reads MSTTFKLDTSTSRANPTPAPM. Mg(2+)-binding residues include Asp67 and Asp106. Residues 67 to 68, Asp106, and Lys136 contribute to the 3-methyl-2-oxobutanoate site; that span reads DS. Glu138 serves as a coordination point for Mg(2+). The active-site Proton acceptor is the Glu205.

The protein belongs to the PanB family. As to quaternary structure, homodecamer; pentamer of dimers. It depends on Mg(2+) as a cofactor.

It is found in the cytoplasm. It catalyses the reaction 3-methyl-2-oxobutanoate + (6R)-5,10-methylene-5,6,7,8-tetrahydrofolate + H2O = 2-dehydropantoate + (6S)-5,6,7,8-tetrahydrofolate. It participates in cofactor biosynthesis; (R)-pantothenate biosynthesis; (R)-pantoate from 3-methyl-2-oxobutanoate: step 1/2. Functionally, catalyzes the reversible reaction in which hydroxymethyl group from 5,10-methylenetetrahydrofolate is transferred onto alpha-ketoisovalerate to form ketopantoate. In Erythrobacter litoralis (strain HTCC2594), this protein is 3-methyl-2-oxobutanoate hydroxymethyltransferase.